The sequence spans 439 residues: MTDYQGKNITVIGLGKTGLSCVDFLTAKKANVRVIDTRKIPAGAEQLDKSIPLHTGSLNQQWLLESDMIVISPGLSVKTAEIQTALSAGVEVVGDIELFCREAAKPVIAITGSNGKSTVTALVTEMGKAAGLSVGMGGNIGIPALSLLNENHDLYVLELSSFQLETTYSLKATAATVLNVTEDHMNRYADLEEYRQAKLNIYHHCQTAVINGEDPLTKEDDKQSAQQQVSFAENNADYWLKTENGKKYLMAKDKLILACDEIKLTGRHNHMNALAAIALAQAAGIKNSGILTALRTFPGLAHRFQLAHMANGVRWVNDSKATNVGSTVAALTGLHIEGKLHLLLGGDGKGADFSELEKLINKPEIFCYCFGQDGAHLAKLSSQSQLFNTMEQAIETLRPTLKPGDMVLLSPACASLDQFASFEKRGEEFTRLAKLSVAQ.

ATP is bound at residue 112 to 118; it reads GSNGKST.

Belongs to the MurCDEF family.

It localises to the cytoplasm. It carries out the reaction UDP-N-acetyl-alpha-D-muramoyl-L-alanine + D-glutamate + ATP = UDP-N-acetyl-alpha-D-muramoyl-L-alanyl-D-glutamate + ADP + phosphate + H(+). It functions in the pathway cell wall biogenesis; peptidoglycan biosynthesis. Functionally, cell wall formation. Catalyzes the addition of glutamate to the nucleotide precursor UDP-N-acetylmuramoyl-L-alanine (UMA). The polypeptide is UDP-N-acetylmuramoylalanine--D-glutamate ligase (Mannheimia succiniciproducens (strain KCTC 0769BP / MBEL55E)).